A 505-amino-acid polypeptide reads, in one-letter code: Trans-cinnamate 4-monooxygenase (505 aa).

The helical transmembrane segment at 3 to 23 threads the bilayer; that stretch reads LILLEKSLLAVFFAVIFSIIV. Residues 213-218 and A306 each bind (E)-cinnamate; that span reads RSRLAQ. Residue C447 participates in heme binding.

This sequence belongs to the cytochrome P450 family. Requires heme as cofactor. As to expression, mostly expressed in stems, and, to a lower extent, in bulbs, roots, leaves and flowers.

The protein localises to the membrane. It catalyses the reaction (E)-cinnamate + reduced [NADPH--hemoprotein reductase] + O2 = (E)-4-coumarate + oxidized [NADPH--hemoprotein reductase] + H2O + H(+). Its pathway is alkaloid biosynthesis. It participates in phenylpropanoid metabolism; trans-4-coumarate biosynthesis; trans-4-coumarate from trans-cinnamate: step 1/1. Functionally, catalyzes the first oxidative step of the phenylpropanoid pathway in higher plants by transforming trans-cinnamate into p-coumarate. The compounds formed by this pathway are essential components for lignification, pollination, and defense against ultraviolet light, predators and pathogens. Trans-4-coumarate is a precursor to all amaryllidaceae alkaloids such as galanthamine, lycorine and haemanthamine, and including haemanthamine- and crinamine-type alkaloids, promising anticancer agents. This Narcissus pseudonarcissus (Daffodil) protein is Trans-cinnamate 4-monooxygenase.